The chain runs to 645 residues: Matrix metalloproteinase-24 (645 aa).

The span at 1 to 10 (MPRSRGGRAA) shows a compositional bias: low complexity. The segment at 1-26 (MPRSRGGRAAPGPPPPPPPPGQAPRW) is disordered. The signal sequence occupies residues 1 to 52 (MPRSRGGRAAPGPPPPPPPPGQAPRWSRWRVPGRLLLLLLPALCCLPGAARA). Over residues 11-22 (PGPPPPPPPPGQ) the composition is skewed to pro residues. The propeptide occupies 53–155 (AAAAAGAGNR…HLSRRRRNKR (103 aa)). The Extracellular segment spans residues 53 to 602 (AAAAAGAGNR…INDVPGSVNA (550 aa)). The Cysteine switch motif lies at 137–144 (PRCGVPDH). Zn(2+)-binding residues include C139 and H282. Residue E283 is part of the active site. Residues H286 and H292 each contribute to the Zn(2+) site. Residues 323–380 (QKIYGPPAEPLEPTRPLPTLPVRRIHSPSERKHERQPRPPRPPLGDRPSTPGTKPNIC) form a disordered region. Pro residues predominate over residues 329–341 (PAEPLEPTRPLPT). Over residues 349 to 359 (SPSERKHERQP) the composition is skewed to basic and acidic residues. Hemopexin repeat units lie at residues 377–425 (PNIC…WKGL), 426–471 (PARI…GSCL), 473–521 (REGI…KGIP), and 522–569 (QAPQ…WMGC). The cysteines at positions 380 and 569 are disulfide-linked. A helical membrane pass occupies residues 603–623 (VAVVIPCILSLCILVLVYTIF). Over 624 to 645 (QFKNKTGPQPVTYYKRPVQEWV) the chain is Cytoplasmic. The short motif at 643 to 645 (EWV) is the PDZ-binding element.

It belongs to the peptidase M10A family. Interacts (via PDZ-binding motif) with APBA3 (via PDZ domain). Interacts with GRIP1 and GRIP2. Requires Zn(2+) as cofactor. Ca(2+) serves as cofactor. In terms of processing, cleaved by a furin endopeptidase in the trans-Golgi network. In terms of tissue distribution, predominantly expressed in brain, kidney, pancreas and lung. Overexpressed in a series of brain tumors, including astrocytomas and glioblastomas.

The protein resides in the cell membrane. It is found in the golgi apparatus. Its subcellular location is the trans-Golgi network membrane. The protein localises to the secreted. It localises to the extracellular space. The protein resides in the extracellular matrix. In terms of biological role, metalloprotease that mediates cleavage of N-cadherin (CDH2) and acts as a regulator of neuro-immune interactions and neural stem cell quiescence. Involved in cell-cell interactions between nociceptive neurites and mast cells, possibly by mediating cleavage of CDH2, thereby acting as a mediator of peripheral thermal nociception and inflammatory hyperalgesia. Key regulator of neural stem cells quiescence by mediating cleavage of CDH2, affecting CDH2-mediated anchorage of neural stem cells to ependymocytes in the adult subependymal zone, leading to modulate their quiescence. May play a role in axonal growth. Able to activate progelatinase A. May also be a proteoglycanase involved in degradation of proteoglycans, such as dermatan sulfate and chondroitin sulfate proteoglycans. Cleaves partially fibronectin, but not collagen type I, nor laminin. The chain is Matrix metalloproteinase-24 (MMP24) from Homo sapiens (Human).